The following is a 328-amino-acid chain: Malate dehydrogenase (328 aa).

11 to 17 (GAAGQIG) provides a ligand contact to NAD(+). Arginine 94 and arginine 100 together coordinate substrate. Residues asparagine 107, glutamine 114, and 131–133 (VGN) each bind NAD(+). Residues asparagine 133 and arginine 164 each contribute to the substrate site. The Proton acceptor role is filled by histidine 189.

The protein belongs to the LDH/MDH superfamily. MDH type 2 family.

It catalyses the reaction (S)-malate + NAD(+) = oxaloacetate + NADH + H(+). Functionally, catalyzes the reversible oxidation of malate to oxaloacetate. This is Malate dehydrogenase from Xanthomonas campestris pv. campestris (strain B100).